The sequence spans 370 residues: 3-isopropylmalate dehydrogenase (370 aa).

NAD(+) is bound at residue 77-90 (GPKWDSVPYEVRPE). Substrate-binding residues include Arg-97, Arg-107, Arg-135, and Asp-226. Residues Asp-226, Asp-250, and Asp-254 each contribute to the Mg(2+) site. Position 290 to 302 (290 to 302 (GSAPDIAGQGLAN)) interacts with NAD(+).

It belongs to the isocitrate and isopropylmalate dehydrogenases family. LeuB type 1 subfamily. As to quaternary structure, homodimer. The cofactor is Mg(2+). Mn(2+) is required as a cofactor.

Its subcellular location is the cytoplasm. It carries out the reaction (2R,3S)-3-isopropylmalate + NAD(+) = 4-methyl-2-oxopentanoate + CO2 + NADH. The protein operates within amino-acid biosynthesis; L-leucine biosynthesis; L-leucine from 3-methyl-2-oxobutanoate: step 3/4. In terms of biological role, catalyzes the oxidation of 3-carboxy-2-hydroxy-4-methylpentanoate (3-isopropylmalate) to 3-carboxy-4-methyl-2-oxopentanoate. The product decarboxylates to 4-methyl-2 oxopentanoate. This Nitrobacter winogradskyi (strain ATCC 25391 / DSM 10237 / CIP 104748 / NCIMB 11846 / Nb-255) protein is 3-isopropylmalate dehydrogenase.